The sequence spans 252 residues: MAVYGIVATVLVLLLLGDASDVEATGRIIGGSDQLIRNAPWQVSIQISARHECGGVIYSKEIIITAGHCLHERSVTLMKVRVGAQNHNYGGTLVPVAAYKVHEQFDSRFLHYDIAVLRLSTPLTFGLSTRAINLASTSPSGGTTVTVTGWGHTDNGALSDSLQKAQLQIIDRGECASQKFGYGADFVGEETICAASTDADACTGDSGGPLVASSQLVGIVSWGYRCADDNYPGVYADVAILRPWIVKAANAI.

Positions 1 to 19 are cleaved as a signal peptide; it reads MAVYGIVATVLVLLLLGDA. Residues 20 to 27 constitute a propeptide, activation peptide; the sequence is SDVEATGR. Positions 28 to 250 constitute a Peptidase S1 domain; the sequence is IIGGSDQLIR…LRPWIVKAAN (223 aa). Cysteine 53 and cysteine 69 are joined by a disulfide. Active-site charge relay system residues include histidine 68 and aspartate 113. 2 disulfide bridges follow: cysteine 175–cysteine 193 and cysteine 202–cysteine 226. Serine 206 (charge relay system) is an active-site residue.

This sequence belongs to the peptidase S1 family.

The protein resides in the secreted. Its subcellular location is the extracellular space. The enzyme catalyses Preferential cleavage: Arg-|-Xaa, Lys-|-Xaa.. The sequence is that of Trypsin iota (iotaTry) from Drosophila melanogaster (Fruit fly).